Reading from the N-terminus, the 218-residue chain is Ropporin-1-like protein (218 aa).

One can recognise an RIIa domain in the interval 17–54 (PALPNMLKQFTKAAIRTQPRDVLQWAADYFSALSKGQD). Positions 199–218 (QSQGGMVQPSNFTSLHTAEK) are disordered.

This sequence belongs to the ropporin family. In terms of assembly, component of axonemal radial spoke complexes.

The protein resides in the cell projection. It localises to the cilium. It is found in the flagellum. Functionally, functions as part of axonemal radial spoke complexes that play an important part in the motility of sperm and cilia. Important for male fertility. Involved in fibrous sheath integrity and sperm motility, plays a role in PKA-dependent signaling processes required for spermatozoa capacitation. The protein is Ropporin-1-like protein (ropn1l) of Danio rerio (Zebrafish).